The primary structure comprises 213 residues: Protein Flattop (213 aa).

The interval 127–213 (VDQPAEQSKI…HNSRPASQEK (87 aa)) is disordered. The span at 151 to 213 (QHIQDQSRPA…HNSRPASQEK (63 aa)) shows a compositional bias: polar residues.

It belongs to the Flattop family.

Its subcellular location is the cytoplasm. The protein localises to the cytoskeleton. It is found in the cilium basal body. The protein resides in the cell projection. It localises to the cilium. Its subcellular location is the apical cell membrane. The protein localises to the cilium axoneme. In terms of biological role, microtubule inner protein (MIP) part of the dynein-decorated doublet microtubules (DMTs) in cilia axoneme. Acts as a regulator of cilium basal body docking and positioning in mono- and multiciliated cells. Regulates basal body docking and cilia formation in multiciliated lung cells. Regulates kinocilium positioning and stereocilia bundle morphogenesis in the inner ear. This Danio rerio (Zebrafish) protein is Protein Flattop.